The sequence spans 463 residues: RuvB-like helicase 2 (463 aa).

An ATP-binding site is contributed by 76 to 83 (GPPSTGKT).

It belongs to the RuvB family. As to quaternary structure, may form heterododecamers with RVB1. Component of the SWR1 chromatin remodeling complex, the INO80 chromatin remodeling complex, and of the R2TP complex.

The protein resides in the nucleus. It catalyses the reaction ATP + H2O = ADP + phosphate + H(+). In terms of biological role, DNA helicase which participates in several chromatin remodeling complexes, including the SWR1 and the INO80 complexes. The SWR1 complex mediates the ATP-dependent exchange of histone H2A for the H2A variant HZT1 leading to transcriptional regulation of selected genes by chromatin remodeling. The INO80 complex remodels chromatin by shifting nucleosomes and is involved in DNA repair. Also involved in pre-rRNA processing. The sequence is that of RuvB-like helicase 2 (RVB2) from Cryptococcus neoformans var. neoformans serotype D (strain JEC21 / ATCC MYA-565) (Filobasidiella neoformans).